A 4115-amino-acid chain; its full sequence is Transcription-associated protein 1 (4115 aa).

A compositionally biased stretch (polar residues) spans 1 to 11; sequence MDPSIPSTSHR. 2 disordered regions span residues 1 to 21 and 543 to 563; these read MDPS…GVQP and ESEQ…KKTS. The segment covering 544-563 has biased composition (basic and acidic residues); sequence SEQKRNELPTPTKEHTKKTS. 2 TPR repeats span residues 1341-1374 and 1820-1853; these read LDGL…LLDL and QDYD…EVIP. The tract at residues 2678 to 2701 is disordered; it reads LEEPEPMEVDQPKNAPAEEPKDNK. Residues 2808–3421 form the FAT domain; the sequence is LIEFISSKHE…SNGASKVSKS (614 aa). One copy of the TPR 3 repeat lies at 2855 to 2888; that stretch reads IETLESLGALYKELAEFDQYSAIWERRSVFPETM. One can recognise a PI3K/PI4K catalytic domain in the interval 3740 to 4100; sequence EPYFEIVMRG…CNSLIIRAKD (361 aa). The segment at 3746 to 3752 is G-loop; it reads VMRGGQV. Residues 3959 to 3967 form a catalytic loop region; that stretch reads NLSPMTPHQ. An activation loop region spans residues 3979 to 4006; sequence NPFYRFELGTGQLMDIEHFAHEVPFRLT. Residues 4083 to 4115 form the FATC domain; the sequence is DAKVKKDDCNSLIIRAKDSDNLSRMPPTYHAWF.

This sequence belongs to the PI3/PI4-kinase family. TRA1 subfamily.

The protein localises to the nucleus. Influences germ cell fate in hermaphrodites. Acts downstream of tra-2 and tra-3 and through the Tip60 histone acetyltransferase complex to regulate germ cell fate decisions. Required for spermatogenesis and embryonic development. Acts with tra-2 to promote expression of fog-3 and control male tail development. Involved in the negative regulation of vulval development. The chain is Transcription-associated protein 1 from Caenorhabditis briggsae.